The chain runs to 558 residues: Coiled-coil domain-containing protein 63 (558 aa).

Positions 1 to 26 (MPTKKHRRKDPESPQEPSEKTKEQLV) are disordered. Over residues 9–26 (KDPESPQEPSEKTKEQLV) the composition is skewed to basic and acidic residues. 2 coiled-coil regions span residues 48 to 289 (NFRS…KAKK) and 339 to 416 (VTEL…VENL). Residues 531–558 (HYATRESRNRDSMPEKGDELKSKKKVTV) are disordered. Basic and acidic residues predominate over residues 533 to 551 (ATRESRNRDSMPEKGDELK).

Plays a role in spermiogenesis. Involved in the elongation of flagella and the formation of sperm heads. The polypeptide is Coiled-coil domain-containing protein 63 (Bos taurus (Bovine)).